Reading from the N-terminus, the 240-residue chain is Membrane-spanning 4-domains subfamily A member 15 (240 aa).

The next 4 membrane-spanning stretches (helical) occupy residues 73-93, 100-120, 144-164, and 173-193; these read VLGT…SVLL, VGIF…FIIS, ILSV…FGVT, and LAVL…AMHF.

It belongs to the MS4A family.

It localises to the membrane. In terms of biological role, may be involved in signal transduction as a component of a multimeric receptor complex. In Homo sapiens (Human), this protein is Membrane-spanning 4-domains subfamily A member 15 (MS4A15).